Here is a 166-residue protein sequence, read N- to C-terminus: Endoribonuclease YbeY (166 aa).

Zn(2+)-binding residues include histidine 132, histidine 136, and histidine 142.

Belongs to the endoribonuclease YbeY family. Zn(2+) is required as a cofactor.

Its subcellular location is the cytoplasm. Its function is as follows. Single strand-specific metallo-endoribonuclease involved in late-stage 70S ribosome quality control and in maturation of the 3' terminus of the 16S rRNA. This Clostridium botulinum (strain Kyoto / Type A2) protein is Endoribonuclease YbeY.